We begin with the raw amino-acid sequence, 621 residues long: Endoglucanase 25 (621 aa).

The interval 1–26 (MYGRDPWGGPLEINTADSATDDDRSR) is disordered. The Cytoplasmic portion of the chain corresponds to 1–70 (MYGRDPWGGP…DLGCIIVSRK (70 aa)). The polarized targeting signal 1 (PTS1) stretch occupies residues 48–49 (LL). The segment at 59–62 (YVDL) is polarized targeting signal 2 (PTS2). A helical; Signal-anchor for type II membrane protein transmembrane segment spans residues 71-91 (IFVWTVGTLVAAALLAGFITL). Residues 92–621 (IVKTVPRHHP…PPPPPAPWKP (530 aa)) lie on the Extracellular side of the membrane. 2 N-linked (GlcNAc...) asparagine glycosylation sites follow: N108 and N133. The active-site Nucleophile is D165. N-linked (GlcNAc...) asparagine glycans are attached at residues N216, N324, N345, N408, and N425. Residues H513 and D561 contribute to the active site. A glycan (N-linked (GlcNAc...) asparagine) is linked at N567. Residue E570 is part of the active site.

Belongs to the glycosyl hydrolase 9 (cellulase E) family. Glycosylated. N-glycosylation of KOR in the endoplasmic reticulum followed by N-glycan modifications in the Golgi are essential for catalytic activity. In terms of tissue distribution, highly expressed in roots and stems, at intermediate levels in leaves and flowers, and at lower levels in siliques. Expressed in xylem (at protein level).

The protein localises to the cell membrane. The enzyme catalyses Endohydrolysis of (1-&gt;4)-beta-D-glucosidic linkages in cellulose, lichenin and cereal beta-D-glucans.. Functionally, required for cellulose microfibril formation. Involved in cell wall assembly during cell elongation and cell plate maturation in cytokinesis. Required for secondary cell wall formation in the developing xylem. May cycle through different intracellular compartments, including plasma membrane. In Arabidopsis thaliana (Mouse-ear cress), this protein is Endoglucanase 25 (KOR).